A 417-amino-acid chain; its full sequence is MRYLWLFLIGTIGLFATDKTLDIIKTIQKLPKIEVRYSTDNDANYALKLHEVLANDLKTSQHFDVSQNKDQGAINYTELKDKKVHLVALVSVAVENGNKISRLKLYDVNTSTLVKTFDYPILSADLYPFAAHNMAIVVNDYLKAPSIAWMKRLIVFSKYIGPGITNIALADYTMRYQKEIIKNNRLNIFPKWANAEQTEFYYTQYGERTPMILKYNIQKATHENIASSQGMAVVSSVSSDGSKILMSLAPDGQPDVYLYDTHKKTKTKITRYPGIDVSGVFLEDDKSMAFVSDRSGYPNIYMKKLGLKESAEQLLYEGRSNESIDAYKDSIVYVSRENLNEFGKTVFNLNLITLNSKYIRRLTVNGSNQMPRFSTDGRNIMYIKKTPQEYAMGLILLDYNQSFLFPLKNVKIQAFDW.

Positions 1–16 (MRYLWLFLIGTIGLFA) are cleaved as a signal peptide.

Belongs to the TolB family. In terms of assembly, the Tol-Pal system is composed of five core proteins: the inner membrane proteins TolA, TolQ and TolR, the periplasmic protein TolB and the outer membrane protein Pal. They form a network linking the inner and outer membranes and the peptidoglycan layer.

Its subcellular location is the periplasm. Part of the Tol-Pal system, which plays a role in outer membrane invagination during cell division and is important for maintaining outer membrane integrity. This is Tol-Pal system protein TolB from Helicobacter pylori (strain HPAG1).